We begin with the raw amino-acid sequence, 297 residues long: Protoheme IX farnesyltransferase (297 aa).

The next 8 helical transmembrane spans lie at 15–35 (VVAL…PAPY), 39–59 (GLLV…AAVF), 91–111 (VWGV…VNII), 112–132 (TVVL…LYLK), 139–159 (IVIG…AVSG), 166–186 (ACLL…ALAI), 220–240 (LLLV…YLVI), and 265–285 (AWST…ALLF).

The protein belongs to the UbiA prenyltransferase family. Protoheme IX farnesyltransferase subfamily.

Its subcellular location is the cell inner membrane. The catalysed reaction is heme b + (2E,6E)-farnesyl diphosphate + H2O = Fe(II)-heme o + diphosphate. Its pathway is porphyrin-containing compound metabolism; heme O biosynthesis; heme O from protoheme: step 1/1. Converts heme B (protoheme IX) to heme O by substitution of the vinyl group on carbon 2 of heme B porphyrin ring with a hydroxyethyl farnesyl side group. This Vesicomyosocius okutanii subsp. Calyptogena okutanii (strain HA) protein is Protoheme IX farnesyltransferase.